Reading from the N-terminus, the 226-residue chain is Ribonuclease 3 (226 aa).

Residues 6–128 enclose the RNase III domain; that stretch reads TKKIQKVLGY…LIGSIYLDSN (123 aa). Glutamate 41 lines the Mg(2+) pocket. The active site involves aspartate 45. The Mg(2+) site is built by asparagine 114 and glutamate 117. Glutamate 117 is a catalytic residue. Positions 155 to 225 constitute a DRBM domain; sequence DPKTRLQEYL…AQKALIKLGV (71 aa).

This sequence belongs to the ribonuclease III family. As to quaternary structure, homodimer. Mg(2+) serves as cofactor.

The protein resides in the cytoplasm. It carries out the reaction Endonucleolytic cleavage to 5'-phosphomonoester.. Functionally, digests double-stranded RNA. Involved in the processing of primary rRNA transcript to yield the immediate precursors to the large and small rRNAs (23S and 16S). Processes some mRNAs, and tRNAs when they are encoded in the rRNA operon. Processes pre-crRNA and tracrRNA of type II CRISPR loci if present in the organism. This chain is Ribonuclease 3, found in Buchnera aphidicola subsp. Acyrthosiphon pisum (strain 5A).